The primary structure comprises 155 residues: 6,7-dimethyl-8-ribityllumazine synthase (155 aa).

5-amino-6-(D-ribitylamino)uracil contacts are provided by residues phenylalanine 23, 57–59 (AFE), and 81–83 (AVI). 86-87 (ST) provides a ligand contact to (2S)-2-hydroxy-3-oxobutyl phosphate. Histidine 89 functions as the Proton donor in the catalytic mechanism. Phenylalanine 114 provides a ligand contact to 5-amino-6-(D-ribitylamino)uracil. Residue arginine 128 participates in (2S)-2-hydroxy-3-oxobutyl phosphate binding.

It belongs to the DMRL synthase family.

The enzyme catalyses (2S)-2-hydroxy-3-oxobutyl phosphate + 5-amino-6-(D-ribitylamino)uracil = 6,7-dimethyl-8-(1-D-ribityl)lumazine + phosphate + 2 H2O + H(+). It participates in cofactor biosynthesis; riboflavin biosynthesis; riboflavin from 2-hydroxy-3-oxobutyl phosphate and 5-amino-6-(D-ribitylamino)uracil: step 1/2. In terms of biological role, catalyzes the formation of 6,7-dimethyl-8-ribityllumazine by condensation of 5-amino-6-(D-ribitylamino)uracil with 3,4-dihydroxy-2-butanone 4-phosphate. This is the penultimate step in the biosynthesis of riboflavin. This is 6,7-dimethyl-8-ribityllumazine synthase from Pelobacter propionicus (strain DSM 2379 / NBRC 103807 / OttBd1).